Consider the following 222-residue polypeptide: Niacin transporter NiaX (222 aa).

A run of 5 helical transmembrane segments spans residues 34–54 (NLII…MMPV), 72–94 (MAAM…LGFM), 101–120 (TIWL…AYVL), 135–155 (IFNF…VYAF), and 167–187 (ALLN…MIDF).

It belongs to the vitamin uptake transporter (VUT/ECF) (TC 2.A.88) family. In L.lactis forms a stable complex with EcfA, EcfA' and EcfT. In E.coli forms a stable energy-coupling factor (ECF) transporter complex composed of 2 membrane-embedded substrate-binding proteins (S component), 2 ATP-binding proteins (A and A' components) and 2 transmembrane proteins (T component), probably with a stoichiometry of 2:1:1:2. May be able to interact with more than 1 S component at a time.

The protein localises to the cell membrane. In terms of biological role, probably a niacin-binding protein that interacts with the energy-coupling factor (ECF) ABC-transporter complex. Unlike classic ABC transporters this ECF transporter provides the energy necessary to transport a number of different substrates. The substrates themselves are bound by transmembrane, not extracytoplasmic soluble proteins. Uptake of niacin into proteosomes containing EcfA1A2T and Niax has been demonstrated. Uptake requires hydrolyzable Mg-ATP and is substrate-specific; NiaX-containing proteosomes did not transport riboflavin. This Lactococcus lactis subsp. cremoris (strain MG1363) protein is Niacin transporter NiaX (niaX).